Reading from the N-terminus, the 208-residue chain is Small ribosomal subunit protein uS4 (208 aa).

Residues 98–159 (RRLDNVAYRL…KSRKVAAISE (62 aa)) form the S4 RNA-binding domain.

It belongs to the universal ribosomal protein uS4 family. In terms of assembly, part of the 30S ribosomal subunit. Contacts protein S5. The interaction surface between S4 and S5 is involved in control of translational fidelity.

One of the primary rRNA binding proteins, it binds directly to 16S rRNA where it nucleates assembly of the body of the 30S subunit. Its function is as follows. With S5 and S12 plays an important role in translational accuracy. This chain is Small ribosomal subunit protein uS4, found in Geobacter sp. (strain M21).